Reading from the N-terminus, the 302-residue chain is Oxygen-dependent coproporphyrinogen-III oxidase (302 aa).

Residue S94 participates in substrate binding. Residues H98 and H108 each contribute to the a divalent metal cation site. Residue H108 is the Proton donor of the active site. 110–112 (NVR) lines the substrate pocket. The a divalent metal cation site is built by H147 and H177. Positions 242 to 277 (YVEFNLVYDRGTLFGLQTGGRTESILMSMPPLVRWQ) are important for dimerization. Position 260 to 262 (260 to 262 (GGR)) interacts with substrate.

This sequence belongs to the aerobic coproporphyrinogen-III oxidase family. In terms of assembly, homodimer. Requires a divalent metal cation as cofactor.

It localises to the cytoplasm. The enzyme catalyses coproporphyrinogen III + O2 + 2 H(+) = protoporphyrinogen IX + 2 CO2 + 2 H2O. Its pathway is porphyrin-containing compound metabolism; protoporphyrin-IX biosynthesis; protoporphyrinogen-IX from coproporphyrinogen-III (O2 route): step 1/1. Functionally, involved in the heme biosynthesis. Catalyzes the aerobic oxidative decarboxylation of propionate groups of rings A and B of coproporphyrinogen-III to yield the vinyl groups in protoporphyrinogen-IX. This chain is Oxygen-dependent coproporphyrinogen-III oxidase, found in Shewanella sp. (strain ANA-3).